The chain runs to 416 residues: Putative competence-damage inducible protein (416 aa).

Belongs to the CinA family.

This chain is Putative competence-damage inducible protein, found in Geobacillus sp. (strain WCH70).